Consider the following 149-residue polypeptide: NPC intracellular cholesterol transporter 2 (149 aa).

An N-terminal signal peptide occupies residues 1 to 21; sequence MRLLVAAFLLLALGDLGPGGA. 3 cysteine pairs are disulfide-bonded: cysteine 27/cysteine 140, cysteine 42/cysteine 47, and cysteine 93/cysteine 99. An N-linked (GlcNAc...) asparagine glycan is attached at asparagine 58. At lysine 116 the chain carries N6-acetyllysine.

This sequence belongs to the NPC2 family. As to quaternary structure, interacts with NPC1 (via the second lumenal domain) in a cholestrol-dependent manner. Interacts with NUS1/NgBR, the interaction stabilizes NCP2 and regulates cholesterol trafficking. Interacts with DHDDS. Interacts with NEDD4L (via C2 domain). Interacts with NPC1L1. As to expression, epididymis. High levels are found in the caput and corpus regions. Weaker levels in the distal cauda and in the efferent ducts.

The protein localises to the secreted. It localises to the endoplasmic reticulum. The protein resides in the lysosome. It catalyses the reaction cholesterol(in) = cholesterol(out). In terms of biological role, intracellular cholesterol transporter which acts in concert with NPC1 and plays an important role in the egress of cholesterol from the lysosomal compartment. Unesterified cholesterol that has been released from LDLs in the lumen of the late endosomes/lysosomes is transferred by NPC2 to the cholesterol-binding pocket in the N-terminal domain of NPC1. May bind and mobilize cholesterol that is associated with membranes. NPC2 binds cholesterol with a 1:1 stoichiometry. Can bind a variety of sterols, including lathosterol, desmosterol and the plant sterols stigmasterol and beta-sitosterol. The secreted form of NCP2 regulates biliary cholesterol secretion via stimulation of ABCG5/ABCG8-mediated cholesterol transport. In Canis lupus familiaris (Dog), this protein is NPC intracellular cholesterol transporter 2.